A 264-amino-acid chain; its full sequence is Hydroxyethylthiazole kinase (264 aa).

Substrate is bound at residue M52. Residues R127 and T173 each coordinate ATP. Substrate is bound at residue G200.

Belongs to the Thz kinase family. Mg(2+) is required as a cofactor.

The catalysed reaction is 5-(2-hydroxyethyl)-4-methylthiazole + ATP = 4-methyl-5-(2-phosphooxyethyl)-thiazole + ADP + H(+). Its pathway is cofactor biosynthesis; thiamine diphosphate biosynthesis; 4-methyl-5-(2-phosphoethyl)-thiazole from 5-(2-hydroxyethyl)-4-methylthiazole: step 1/1. Catalyzes the phosphorylation of the hydroxyl group of 4-methyl-5-beta-hydroxyethylthiazole (THZ). This is Hydroxyethylthiazole kinase from Serratia proteamaculans (strain 568).